We begin with the raw amino-acid sequence, 1020 residues long: Glucan endo-1,3-beta-D-glucosidase (1020 aa).

A signal peptide spans 1–25 (MKGKNVQLLFALVVIILLFPTGASA). The segment at 28 to 251 (HAVSVGKGSY…ADYIAIAKLP (224 aa)) is beta-sandwich subdomain. One can recognise a GH81 domain in the interval 28 to 722 (HAVSVGKGSY…HWIHNLAELG (695 aa)). An alpha/beta subdomain region spans residues 252-350 (EKDGNMLAKF…EGKRFTTELT (99 aa)). The (alpha/beta)6 barrel subdomain stretch occupies residues 360–722 (DLGDYDRERL…HWIHNLAELG (363 aa)). The (1,3-beta-D-glucosyl)n site is built by Y387, K391, H458, D466, H470, D530, N540, E542, E546, E699, and R704. The active site involves D466. Residues E542 and E546 contribute to the active site. Positions 771–790 (HSFNIGNGDGPTNPDPSEPD) are disordered. One can recognise a CBM6 domain in the interval 796–922 (ERIQAEAYDA…LMNVNWFVFR (127 aa)). Residues E812, W825, D853, N878, D912, and N915 each contribute to the (1,3-beta-D-glucosyl)n site. A CBM56 domain is found at 928–1020 (NGDSHTHPDY…YTTEWFTYSR (93 aa)).

The protein belongs to the glycosyl hydrolase 81 family.

Its subcellular location is the secreted. It carries out the reaction Hydrolysis of (1-&gt;3)-beta-D-glucosidic linkages in (1-&gt;3)-beta-D-glucans.. Its function is as follows. Cleaves internal linkages in 1,3-beta-glucan. May contribute to plant biomass degradation. In Halalkalibacterium halodurans (strain ATCC BAA-125 / DSM 18197 / FERM 7344 / JCM 9153 / C-125) (Bacillus halodurans), this protein is Glucan endo-1,3-beta-D-glucosidase.